Reading from the N-terminus, the 358-residue chain is GTPase Obg (358 aa).

In terms of domain architecture, Obg spans 1–158 (MFVDNVDIYV…RHVRLELKLI (158 aa)). Residues 159–355 (ADVGLVGFPN…LKYLLHESVR (197 aa)) enclose the OBG-type G domain. Residues 165 to 172 (GFPNVGKS), 190 to 194 (FTTLI), 212 to 215 (DIPG), 280 to 283 (SKVD), and 336 to 338 (SSA) each bind GTP. Residues serine 172 and threonine 192 each contribute to the Mg(2+) site.

This sequence belongs to the TRAFAC class OBG-HflX-like GTPase superfamily. OBG GTPase family. In terms of assembly, monomer. Mg(2+) serves as cofactor.

The protein resides in the cytoplasm. In terms of biological role, an essential GTPase which binds GTP, GDP and possibly (p)ppGpp with moderate affinity, with high nucleotide exchange rates and a fairly low GTP hydrolysis rate. Plays a role in control of the cell cycle, stress response, ribosome biogenesis and in those bacteria that undergo differentiation, in morphogenesis control. The sequence is that of GTPase Obg from Wolinella succinogenes (strain ATCC 29543 / DSM 1740 / CCUG 13145 / JCM 31913 / LMG 7466 / NCTC 11488 / FDC 602W) (Vibrio succinogenes).